The sequence spans 448 residues: Trigger factor (448 aa).

The PPIase FKBP-type domain maps to 173-258 (SDRVTIDFVG…LKQIEWAHMP (86 aa)).

It belongs to the FKBP-type PPIase family. Tig subfamily.

The protein localises to the cytoplasm. The catalysed reaction is [protein]-peptidylproline (omega=180) = [protein]-peptidylproline (omega=0). Involved in protein export. Acts as a chaperone by maintaining the newly synthesized protein in an open conformation. Functions as a peptidyl-prolyl cis-trans isomerase. The protein is Trigger factor of Herminiimonas arsenicoxydans.